The primary structure comprises 269 residues: Pertussis toxin subunit 1 homolog (269 aa).

Residues 1–34 form the signal peptide; it reads MRCTRAIRQTARTGWLTWLAILAVTAPVTSPAWA.

The protein belongs to the bacterial exotoxin subunit A family.

The sequence is that of Pertussis toxin subunit 1 homolog (ptxA) from Bordetella bronchiseptica (strain ATCC BAA-588 / NCTC 13252 / RB50) (Alcaligenes bronchisepticus).